The primary structure comprises 212 residues: uncharacterized protein (212 aa).

It belongs to the flavoredoxin family. The cofactor is FMN.

This is an uncharacterized protein from Methanothermobacter thermautotrophicus (strain ATCC 29096 / DSM 1053 / JCM 10044 / NBRC 100330 / Delta H) (Methanobacterium thermoautotrophicum).